We begin with the raw amino-acid sequence, 492 residues long: MDAMKYHDLRDFLTLLEQQGELKRITLPVDPHLEITEIADRTLRAGGPALLFENPKGYAMPVLCNLFGTPKRVAMGMGQDDVSALREVGKLLAFLKEPEPPKGFRDLFDKLPQFKQVLNMPTKRLRGAPCQQKIASGDDVDLTRLPVMTCWPDDAAPLITWGLTVTRGPHKERQNLGIYRQQLIGKNKLIMRWLSHRGGALDFQEWLAARPGERFPVSVALGADPATILGAVTPVPDTLSEYAFAGLLRGTKTEVVKCLSNDLEVPASAEIILEGYIEPGEMAPEGPYGDHTGYYNEVDNFPVFTVTHITQREDAIYHSTYTGRPPDEPAVLGVALNEVFVPILQKQFPEIVDFYLPPEGCSYRLAVVTMKKQYAGHAKRVMMGVWSFLRQFMYTKFVIVCDDDVNARDWNDVIWAITTRMDPARDTVLVENTPIDYLDFASPVSGLGSKMGLDATNKWPGETQREWGRPIVKDPEVTARIDAIWDELAIFK.

Position 175 (Asn175) interacts with Mn(2+). Residues Ile178 to Arg180, Arg192 to Leu194, and Arg197 to Gly198 each bind prenylated FMN. Glu241 serves as a coordination point for Mn(2+). Asp290 (proton donor) is an active-site residue.

Belongs to the UbiD family. As to quaternary structure, homohexamer. It depends on prenylated FMN as a cofactor. Mn(2+) serves as cofactor.

It localises to the cell membrane. The enzyme catalyses a 4-hydroxy-3-(all-trans-polyprenyl)benzoate + H(+) = a 2-(all-trans-polyprenyl)phenol + CO2. It functions in the pathway cofactor biosynthesis; ubiquinone biosynthesis. Its function is as follows. Catalyzes the decarboxylation of 3-octaprenyl-4-hydroxy benzoate to 2-octaprenylphenol, an intermediate step in ubiquinone biosynthesis. This chain is 3-octaprenyl-4-hydroxybenzoate carboxy-lyase, found in Salmonella typhi.